We begin with the raw amino-acid sequence, 384 residues long: 8-amino-7-oxononanoate synthase (384 aa).

Substrate is bound at residue R23. Position 110–111 (G110–F111) interacts with pyridoxal 5'-phosphate. H135 contributes to the substrate binding site. 3 residues coordinate pyridoxal 5'-phosphate: S179, H206, and T232. K235 carries the N6-(pyridoxal phosphate)lysine modification. Position 348 (T348) interacts with substrate.

It belongs to the class-II pyridoxal-phosphate-dependent aminotransferase family. BioF subfamily. As to quaternary structure, homodimer. Pyridoxal 5'-phosphate serves as cofactor.

It carries out the reaction 6-carboxyhexanoyl-[ACP] + L-alanine + H(+) = (8S)-8-amino-7-oxononanoate + holo-[ACP] + CO2. Its pathway is cofactor biosynthesis; biotin biosynthesis. Catalyzes the decarboxylative condensation of pimeloyl-[acyl-carrier protein] and L-alanine to produce 8-amino-7-oxononanoate (AON), [acyl-carrier protein], and carbon dioxide. This is 8-amino-7-oxononanoate synthase from Vibrio cholerae serotype O1 (strain ATCC 39315 / El Tor Inaba N16961).